Here is a 24-residue protein sequence, read N- to C-terminus: Osteocalcin (24 aa).

The Gla domain maps to 1-24; that stretch reads REVCELNPDCDELADHIGFQEAYR. The Ca(2+) site is built by E2, E5, and D11. Residues E2 and E5 each carry the 4-carboxyglutamate modification. A disulfide bridge links C4 with C10.

This sequence belongs to the osteocalcin/matrix Gla protein family. In terms of processing, gamma-carboxyglutamate residues are formed by vitamin K dependent carboxylation by GGCX. These residues are essential for the binding of calcium. Decarboxylation promotes the hormone activity.

It is found in the secreted. Its function is as follows. The carboxylated form is one of the main organic components of the bone matrix, which constitutes 1-2% of the total bone protein: it acts as a negative regulator of bone formation and is required to limit bone formation without impairing bone resorption or mineralization. The carboxylated form binds strongly to apatite and calcium. In terms of biological role, the uncarboxylated form acts as a hormone secreted by osteoblasts, which regulates different cellular processes, such as energy metabolism, male fertility and brain development. Regulates of energy metabolism by acting as a hormone favoring pancreatic beta-cell proliferation, insulin secretion and sensitivity and energy expenditure. Uncarboxylated osteocalcin hormone also promotes testosterone production in the testes: acts as a ligand for G protein-coupled receptor GPRC6A at the surface of Leydig cells, initiating a signaling response that promotes the expression of enzymes required for testosterone synthesis in a CREB-dependent manner. Also acts as a regulator of brain development: osteocalcin hormone crosses the blood-brain barrier and acts as a ligand for GPR158 on neurons, initiating a signaling response that prevents neuronal apoptosis in the hippocampus, favors the synthesis of all monoamine neurotransmitters and inhibits that of gamma-aminobutyric acid (GABA). Osteocalcin also crosses the placenta during pregnancy and maternal osteocalcin is required for fetal brain development. The protein is Osteocalcin of Homo sapiens neanderthalensis (Neanderthal).